The primary structure comprises 218 residues: Small ribosomal subunit protein uS3 (218 aa).

The KH type-2 domain occupies 38 to 106 (IREYINKRLQ…RVHINIVEIK (69 aa)).

Belongs to the universal ribosomal protein uS3 family. In terms of assembly, part of the 30S ribosomal subunit. Forms a tight complex with proteins S10 and S14.

Binds the lower part of the 30S subunit head. Binds mRNA in the 70S ribosome, positioning it for translation. The chain is Small ribosomal subunit protein uS3 from Geobacillus sp. (strain WCH70).